Reading from the N-terminus, the 141-residue chain is Large ribosomal subunit protein uL11 (141 aa).

Belongs to the universal ribosomal protein uL11 family. In terms of assembly, part of the ribosomal stalk of the 50S ribosomal subunit. Interacts with L10 and the large rRNA to form the base of the stalk. L10 forms an elongated spine to which L12 dimers bind in a sequential fashion forming a multimeric L10(L12)X complex. One or more lysine residues are methylated.

Forms part of the ribosomal stalk which helps the ribosome interact with GTP-bound translation factors. This is Large ribosomal subunit protein uL11 from Coprothermobacter proteolyticus (strain ATCC 35245 / DSM 5265 / OCM 4 / BT).